The sequence spans 340 residues: 4-dimethylallyltryptophan N-methyltransferase easF (340 aa).

Belongs to the methyltransferase superfamily. As to quaternary structure, homodimer.

It carries out the reaction 4-(3-methylbut-2-enyl)-L-tryptophan + S-adenosyl-L-methionine = 4-(3-methylbut-2-enyl)-L-abrine + S-adenosyl-L-homocysteine + H(+). It functions in the pathway alkaloid biosynthesis; ergot alkaloid biosynthesis. Functionally, 4-dimethylallyltryptophan N-methyltransferase; part of the gene cluster that mediates the biosynthesis of fungal ergot alkaloid. DmaW catalyzes the first step of ergot alkaloid biosynthesis by condensing dimethylallyl diphosphate (DMAP) and tryptophan to form 4-dimethylallyl-L-tryptophan. The second step is catalyzed by the methyltransferase easF that methylates 4-dimethylallyl-L-tryptophan in the presence of S-adenosyl-L-methionine, resulting in the formation of 4-dimethylallyl-L-abrine. The catalase easC and the FAD-dependent oxidoreductase easE then transform 4-dimethylallyl-L-abrine to chanoclavine-I which is further oxidized by easD in the presence of NAD(+), resulting in the formation of chanoclavine-I aldehyde. Chanoclavine-I aldehyde is the precursor of ergoamides and ergopeptines in Clavicipitaceae, and clavine-type alcaloids such as fumiclavine in Trichocomaceae. However, the metabolites downstream of chanoclavine-I aldehyde in Arthrodermataceae have not been identified yet. This chain is 4-dimethylallyltryptophan N-methyltransferase easF, found in Arthroderma benhamiae (strain ATCC MYA-4681 / CBS 112371) (Trichophyton mentagrophytes).